Reading from the N-terminus, the 157-residue chain is Glycine-rich RNA-binding, abscisic acid-inducible protein (157 aa).

Residues 8-86 (YRCFVGGLAW…RNITVNQAQS (79 aa)) form the RRM domain. The interval 82–157 (NQAQSRGGGG…YGGGGGGWRD (76 aa)) is disordered. Residues 87-157 (RGGGGGGGGY…YGGGGGGWRD (71 aa)) show a composition bias toward gly residues.

Functionally, possibly has a role in RNA transcription or processing during stress. The chain is Glycine-rich RNA-binding, abscisic acid-inducible protein (RAB15) from Zea mays (Maize).